Consider the following 435-residue polypeptide: Light-independent protochlorophyllide reductase subunit N (435 aa).

Residues Cys23, Cys48, and Cys108 each contribute to the [4Fe-4S] cluster site.

This sequence belongs to the BchN/ChlN family. Protochlorophyllide reductase is composed of three subunits; ChlL, ChlN and ChlB. Forms a heterotetramer of two ChlB and two ChlN subunits. It depends on [4Fe-4S] cluster as a cofactor.

It localises to the plastid. It is found in the chloroplast. The enzyme catalyses chlorophyllide a + oxidized 2[4Fe-4S]-[ferredoxin] + 2 ADP + 2 phosphate = protochlorophyllide a + reduced 2[4Fe-4S]-[ferredoxin] + 2 ATP + 2 H2O. It participates in porphyrin-containing compound metabolism; chlorophyll biosynthesis (light-independent). Functionally, component of the dark-operative protochlorophyllide reductase (DPOR) that uses Mg-ATP and reduced ferredoxin to reduce ring D of protochlorophyllide (Pchlide) to form chlorophyllide a (Chlide). This reaction is light-independent. The NB-protein (ChlN-ChlB) is the catalytic component of the complex. The chain is Light-independent protochlorophyllide reductase subunit N from Auxenochlorella protothecoides (Green microalga).